Consider the following 354-residue polypeptide: MALVSMRQLLDHAADDSYGLPAFNVNNMEQVKAIMDAARATSSPVILQGSAGARKYAGEPFLRHLIAAAVEAYPEIPVVMHQDHGASPAVCMGAIKSGFSSVMMDGSLKEDGKTPADYDYNVSVTAKVVELAHAVGVSVEGELGCLGSLETGKGEAEDGHGAEEALDHSKLLTDPDEAAQFVKATQCDALAIAIGTSHGAYKFTRKPTGDILAIDRIKAIHQRIPTTHLVMHGSSSVPQELLEEIRTYGGDIKETYGVPVEEIQEGIRYGVRKVNIDTDIRLAMTAAIRRVGAKNKSEFDPRKFMAAAMEEAKKVCIARFEAFGSAGKAEKIRAIELDEMAKRYASGELAQVVH.

A D-glyceraldehyde 3-phosphate-binding site is contributed by serine 50. The active-site Proton donor is aspartate 83. The Zn(2+) site is built by histidine 84, aspartate 105, glutamate 142, and histidine 198. Residue glycine 199 coordinates dihydroxyacetone phosphate. Zn(2+) is bound at residue histidine 232. Residues 233-235 and 275-278 each bind dihydroxyacetone phosphate; these read GSS and NIDT.

The protein belongs to the class II fructose-bisphosphate aldolase family. As to quaternary structure, homodimer. Zn(2+) is required as a cofactor.

The catalysed reaction is beta-D-fructose 1,6-bisphosphate = D-glyceraldehyde 3-phosphate + dihydroxyacetone phosphate. It participates in carbohydrate biosynthesis; Calvin cycle. The protein operates within carbohydrate degradation; glycolysis; D-glyceraldehyde 3-phosphate and glycerone phosphate from D-glucose: step 4/4. With respect to regulation, activity is stimulated by Fe(2+) in autotrophically grown cells. Its function is as follows. Catalyzes the aldol condensation of dihydroxyacetone phosphate (DHAP or glycerone-phosphate) with glyceraldehyde 3-phosphate (G3P) to form fructose 1,6-bisphosphate (FBP) in gluconeogenesis and the reverse reaction in glycolysis. The sequence is that of Fructose-bisphosphate aldolase from Xanthobacter flavus.